A 430-amino-acid chain; its full sequence is UDP-N-acetylmuramoylalanine--D-glutamate ligase (430 aa).

105-111 (GSNGKTT) serves as a coordination point for ATP.

Belongs to the MurCDEF family.

It is found in the cytoplasm. The catalysed reaction is UDP-N-acetyl-alpha-D-muramoyl-L-alanine + D-glutamate + ATP = UDP-N-acetyl-alpha-D-muramoyl-L-alanyl-D-glutamate + ADP + phosphate + H(+). Its pathway is cell wall biogenesis; peptidoglycan biosynthesis. Cell wall formation. Catalyzes the addition of glutamate to the nucleotide precursor UDP-N-acetylmuramoyl-L-alanine (UMA). This is UDP-N-acetylmuramoylalanine--D-glutamate ligase from Pseudothermotoga lettingae (strain ATCC BAA-301 / DSM 14385 / NBRC 107922 / TMO) (Thermotoga lettingae).